Reading from the N-terminus, the 214-residue chain is Phosphatidylserine decarboxylase proenzyme (214 aa).

Residue Ser-182 is the Schiff-base intermediate with substrate; via pyruvic acid of the active site. Residue Ser-182 is modified to Pyruvic acid (Ser); by autocatalysis.

This sequence belongs to the phosphatidylserine decarboxylase family. PSD-A subfamily. Heterodimer of a large membrane-associated beta subunit and a small pyruvoyl-containing alpha subunit. Requires pyruvate as cofactor. Post-translationally, is synthesized initially as an inactive proenzyme. Formation of the active enzyme involves a self-maturation process in which the active site pyruvoyl group is generated from an internal serine residue via an autocatalytic post-translational modification. Two non-identical subunits are generated from the proenzyme in this reaction, and the pyruvate is formed at the N-terminus of the alpha chain, which is derived from the carboxyl end of the proenzyme. The post-translation cleavage follows an unusual pathway, termed non-hydrolytic serinolysis, in which the side chain hydroxyl group of the serine supplies its oxygen atom to form the C-terminus of the beta chain, while the remainder of the serine residue undergoes an oxidative deamination to produce ammonia and the pyruvoyl prosthetic group on the alpha chain.

It localises to the cell membrane. It catalyses the reaction a 1,2-diacyl-sn-glycero-3-phospho-L-serine + H(+) = a 1,2-diacyl-sn-glycero-3-phosphoethanolamine + CO2. Its pathway is phospholipid metabolism; phosphatidylethanolamine biosynthesis; phosphatidylethanolamine from CDP-diacylglycerol: step 2/2. Catalyzes the formation of phosphatidylethanolamine (PtdEtn) from phosphatidylserine (PtdSer). In Burkholderia ambifaria (strain MC40-6), this protein is Phosphatidylserine decarboxylase proenzyme.